A 264-amino-acid chain; its full sequence is 3-methyl-2-oxobutanoate hydroxymethyltransferase (264 aa).

Mg(2+)-binding residues include aspartate 45 and aspartate 84. 3-methyl-2-oxobutanoate contacts are provided by residues 45–46 (DS), aspartate 84, and lysine 113. Glutamate 115 provides a ligand contact to Mg(2+). Glutamate 182 acts as the Proton acceptor in catalysis.

This sequence belongs to the PanB family. Homodecamer; pentamer of dimers. Mg(2+) serves as cofactor.

It is found in the cytoplasm. The catalysed reaction is 3-methyl-2-oxobutanoate + (6R)-5,10-methylene-5,6,7,8-tetrahydrofolate + H2O = 2-dehydropantoate + (6S)-5,6,7,8-tetrahydrofolate. It participates in cofactor biosynthesis; (R)-pantothenate biosynthesis; (R)-pantoate from 3-methyl-2-oxobutanoate: step 1/2. In terms of biological role, catalyzes the reversible reaction in which hydroxymethyl group from 5,10-methylenetetrahydrofolate is transferred onto alpha-ketoisovalerate to form ketopantoate. This chain is 3-methyl-2-oxobutanoate hydroxymethyltransferase, found in Helicobacter hepaticus (strain ATCC 51449 / 3B1).